A 218-amino-acid chain; its full sequence is Adenylate kinase (218 aa).

10 to 15 provides a ligand contact to ATP; the sequence is GAGKGT. The segment at 30-59 is NMP; that stretch reads STGDMLRAAVKAGSPLGLKVKEVMATGGLV. Residues Thr-31, Arg-36, 57-59, 85-88, and Gln-92 contribute to the AMP site; these read GLV and GFPR. Positions 122–159 are LID; sequence GRRVHEASGRVYHVDYNPPKVEGKDDVTGEPLVQREDD. ATP is bound by residues Arg-123 and 132–133; that span reads VY. AMP is bound by residues Arg-156 and Arg-167. Residue Gly-203 participates in ATP binding.

This sequence belongs to the adenylate kinase family. As to quaternary structure, monomer.

It is found in the cytoplasm. It carries out the reaction AMP + ATP = 2 ADP. It participates in purine metabolism; AMP biosynthesis via salvage pathway; AMP from ADP: step 1/1. Its function is as follows. Catalyzes the reversible transfer of the terminal phosphate group between ATP and AMP. Plays an important role in cellular energy homeostasis and in adenine nucleotide metabolism. The chain is Adenylate kinase from Hahella chejuensis (strain KCTC 2396).